The primary structure comprises 235 residues: Protein Thf1 (235 aa).

Positions 179-228 (LNLSSDKLQKDLDLYRSNVDKMGQLLAVIEDALEAERKKREKAKQEVATT) form a coiled coil.

The protein belongs to the THF1 family.

May be involved in photosynthetic membrane biogenesis. This is Protein Thf1 from Rippkaea orientalis (strain PCC 8801 / RF-1) (Cyanothece sp. (strain PCC 8801)).